The following is a 294-amino-acid chain: Protein farnesyltransferase/geranylgeranyltransferase type-1 subunit alpha (294 aa).

5 PFTA repeats span residues Y57–S91, Y92–K125, N126–D160, Y161–K194, and S199–P233.

Belongs to the protein prenyltransferase subunit alpha family. As to quaternary structure, heterodimer of an alpha(cwp1) and a beta(cpp1 or cwg2) subunit. Mg(2+) is required as a cofactor.

The enzyme catalyses L-cysteinyl-[protein] + (2E,6E)-farnesyl diphosphate = S-(2E,6E)-farnesyl-L-cysteinyl-[protein] + diphosphate. It carries out the reaction geranylgeranyl diphosphate + L-cysteinyl-[protein] = S-geranylgeranyl-L-cysteinyl-[protein] + diphosphate. Functionally, catalyzes the transfer of a farnesyl or geranyl-geranyl moiety from farnesyl or geranyl-geranyl diphosphate to a cysteine at the fourth position from the C-terminus of several proteins having the C-terminal sequence Cys-aliphatic-aliphatic-X. The alpha(cwp1) subunit is thought to participate in a stable complex with the substrate. The beta(cpp1 or cwg2) subunits bind the peptide substrate. The chain is Protein farnesyltransferase/geranylgeranyltransferase type-1 subunit alpha (cwp1) from Schizosaccharomyces pombe (strain 972 / ATCC 24843) (Fission yeast).